Here is a 243-residue protein sequence, read N- to C-terminus: Carboxy-S-adenosyl-L-methionine synthase (243 aa).

S-adenosyl-L-methionine contacts are provided by residues Tyr-39, 64 to 66 (GCS), Asn-132, and Arg-199.

The protein belongs to the class I-like SAM-binding methyltransferase superfamily. Cx-SAM synthase family. Homodimer.

The catalysed reaction is prephenate + S-adenosyl-L-methionine = carboxy-S-adenosyl-L-methionine + 3-phenylpyruvate + H2O. Functionally, catalyzes the conversion of S-adenosyl-L-methionine (SAM) to carboxy-S-adenosyl-L-methionine (Cx-SAM). The sequence is that of Carboxy-S-adenosyl-L-methionine synthase from Alteromonas mediterranea (strain DSM 17117 / CIP 110805 / LMG 28347 / Deep ecotype).